The following is a 61-amino-acid chain: MLNIFSLICICLNSALYSSSLFFAKLPEAYAFLNPIVDLMPVIPLFFFLLAFVWQAAVSFR.

The propeptide occupies 1-24 (MLNIFSLICICLNSALYSSSLFFA). The helical transmembrane segment at 40 to 60 (MPVIPLFFFLLAFVWQAAVSF) threads the bilayer.

The protein belongs to the PsbK family. As to quaternary structure, PSII is composed of 1 copy each of membrane proteins PsbA, PsbB, PsbC, PsbD, PsbE, PsbF, PsbH, PsbI, PsbJ, PsbK, PsbL, PsbM, PsbT, PsbX, PsbY, PsbZ, Psb30/Ycf12, at least 3 peripheral proteins of the oxygen-evolving complex and a large number of cofactors. It forms dimeric complexes.

It localises to the plastid. It is found in the chloroplast thylakoid membrane. Its function is as follows. One of the components of the core complex of photosystem II (PSII). PSII is a light-driven water:plastoquinone oxidoreductase that uses light energy to abstract electrons from H(2)O, generating O(2) and a proton gradient subsequently used for ATP formation. It consists of a core antenna complex that captures photons, and an electron transfer chain that converts photonic excitation into a charge separation. This Panax ginseng (Korean ginseng) protein is Photosystem II reaction center protein K.